Here is a 431-residue protein sequence, read N- to C-terminus: Hemagglutinin-esterase (431 aa).

The first 21 residues, 1–21 (MARTDAMAPRTLLLVLSLGYA), serve as a signal peptide directing secretion. The tract at residues 11 to 131 (TLLLVLSLGY…DNNRWMGNKA (121 aa)) is esterase domain 1. At 22 to 399 (FGFNEPLNVV…PVCMYDPLPV (378 aa)) the chain is on the virion surface side. The Nucleophile role is filled by Ser44. Cys48 and Cys69 are oxidised to a cystine. 8 N-linked (GlcNAc...) asparagine; by host glycosylation sites follow: Asn53, Asn93, Asn151, Asn157, Asn199, Asn244, Asn248, and Asn309. Cys117 and Cys166 form a disulfide bridge. The receptor binding stretch occupies residues 132 to 274 (RFYTQLYQKM…GNYISISNEL (143 aa)). 2 disulfides stabilise this stretch: Cys205-Cys284 and Cys213-Cys257. The interval 275-387 (LLTVPSKAIC…HCPTAANIVF (113 aa)) is esterase domain 2. Cys315 and Cys320 are oxidised to a cystine. An N-linked (GlcNAc...) asparagine; by host glycan is attached at Asn324. Residues Asp334 and His337 each act as charge relay system in the active site. Asn352 and Asn366 each carry an N-linked (GlcNAc...) asparagine; by host glycan. An intrachain disulfide couples Cys355 to Cys379. A helical membrane pass occupies residues 400-420 (ILLGVLLGIAVLIIVFLMFYF). Topologically, residues 421-431 (MTDSGVRLHEA) are intravirion.

This sequence belongs to the influenza type C/coronaviruses hemagglutinin-esterase family. As to quaternary structure, homodimer; disulfide-linked. Forms a complex with the M protein in the pre-Golgi. Associates then with S-M complex to form a ternary complex S-M-HE. In terms of processing, N-glycosylated in the host RER.

Its subcellular location is the virion membrane. It is found in the host cell membrane. It catalyses the reaction N-acetyl-9-O-acetylneuraminate + H2O = N-acetylneuraminate + acetate + H(+). The enzyme catalyses N-acetyl-4-O-acetylneuraminate + H2O = N-acetylneuraminate + acetate + H(+). Functionally, structural protein that makes short spikes at the surface of the virus. Contains receptor binding and receptor-destroying activities. Mediates de-O-acetylation of N-acetyl-4-O-acetylneuraminic acid, which is probably the receptor determinant recognized by the virus on the surface of erythrocytes and susceptible cells. This receptor-destroying activity is important for virus release as it probably helps preventing self-aggregation and ensures the efficient spread of the progeny virus from cell to cell. May serve as a secondary viral attachment protein for initiating infection, the spike protein being the major one. May become a target for both the humoral and the cellular branches of the immune system. This chain is Hemagglutinin-esterase, found in Murine coronavirus (strain DVIM) (MHV-DVIM).